Consider the following 444-residue polypeptide: Lycopaoctaene synthase (444 aa).

Residues R48 and R73 each coordinate NADP(+). The Mg(2+) site is built by D76, E79, and D80. NADP(+)-binding residues include R215, K315, and R317. 2 helical membrane-spanning segments follow: residues 391–411 and 415–435; these read TAMVLAGALLIAALAYFAYVY and GTSLKALPLFGVVIILAIGLF.

Belongs to the phytoene/squalene synthase family. It depends on Mg(2+) as a cofactor.

It is found in the membrane. The catalysed reaction is 2 (2E,6E)-farnesyl diphosphate + NADH + H(+) = squalene + 2 diphosphate + NAD(+). It catalyses the reaction 2 (2E,6E)-farnesyl diphosphate + NADPH + H(+) = squalene + 2 diphosphate + NADP(+). It carries out the reaction 2 (2E,6E,10E)-geranylgeranyl diphosphate + NADPH + H(+) = all-trans-lycopaoctaene + 2 diphosphate + NADP(+). Functionally, converts the C20 geranylgeranyl diphosphate (GGPP) to the C40 lycopaoctaene, the first committed intermediate in the production of lycopadiene. Converts farnesyl diphosphate (FPP) into squalene, a precursor for sterol biosynthesis in eukaryotes. Converts with low efficiency the C20 phytyl diphosphate (PPP) to the C40 lycopadiene in vitro. This reaction may not have biological significance in vivo. The protein is Lycopaoctaene synthase of Botryococcus braunii (Green alga).